Reading from the N-terminus, the 472-residue chain is Argininosuccinate lyase (472 aa).

It belongs to the lyase 1 family. Argininosuccinate lyase subfamily.

It localises to the cytoplasm. The enzyme catalyses 2-(N(omega)-L-arginino)succinate = fumarate + L-arginine. Its pathway is amino-acid biosynthesis; L-arginine biosynthesis; L-arginine from L-ornithine and carbamoyl phosphate: step 3/3. The protein is Argininosuccinate lyase of Rhodococcus opacus (strain B4).